A 67-amino-acid polypeptide reads, in one-letter code: Large ribosomal subunit protein uL29 (67 aa).

Belongs to the universal ribosomal protein uL29 family.

This Methanosarcina barkeri (strain Fusaro / DSM 804) protein is Large ribosomal subunit protein uL29.